The sequence spans 357 residues: DNA primase small subunit PriS (357 aa).

Catalysis depends on residues Asp105, Asp107, and Asp259.

It belongs to the eukaryotic-type primase small subunit family. Heterodimer of a small subunit (PriS) and a large subunit (PriL). Mg(2+) serves as cofactor. Mn(2+) is required as a cofactor.

Its function is as follows. Catalytic subunit of DNA primase, an RNA polymerase that catalyzes the synthesis of short RNA molecules used as primers for DNA polymerase during DNA replication. The small subunit contains the primase catalytic core and has DNA synthesis activity on its own. Binding to the large subunit stabilizes and modulates the activity, increasing the rate of DNA synthesis while decreasing the length of the DNA fragments, and conferring RNA synthesis capability. The DNA polymerase activity may enable DNA primase to also catalyze primer extension after primer synthesis. May also play a role in DNA repair. This chain is DNA primase small subunit PriS, found in Methanococcus maripaludis (strain C5 / ATCC BAA-1333).